We begin with the raw amino-acid sequence, 328 residues long: UPF0421 protein SAUSA300_1870 (328 aa).

A run of 4 helical transmembrane segments spans residues 19 to 39, 61 to 81, 108 to 128, and 132 to 152; these read IAIF…IYAI, LPAT…FGDQ, VAVL…IFNF, and TLTA…VFPP.

It belongs to the UPF0421 family.

The protein resides in the cell membrane. The chain is UPF0421 protein SAUSA300_1870 from Staphylococcus aureus (strain USA300).